We begin with the raw amino-acid sequence, 139 residues long: ATP synthase epsilon chain (139 aa).

This sequence belongs to the ATPase epsilon chain family. As to quaternary structure, F-type ATPases have 2 components, CF(1) - the catalytic core - and CF(0) - the membrane proton channel. CF(1) has five subunits: alpha(3), beta(3), gamma(1), delta(1), epsilon(1). CF(0) has three main subunits: a, b and c.

The protein resides in the cell inner membrane. In terms of biological role, produces ATP from ADP in the presence of a proton gradient across the membrane. This is ATP synthase epsilon chain from Actinobacillus pleuropneumoniae serotype 5b (strain L20).